The primary structure comprises 1848 residues: Unconventional myosin-Vb (1848 aa).

Residue Met-1 is modified to N-acetylmethionine. Residues 8–60 enclose the Myosin N-terminal SH3-like domain; sequence SQCTRVWIPDPDEVWRSAELTKDYKEGDKSLQLRLEDETILEYPIDVQRNQLP. The interval 21–40 is requires for interaction with LIMA1; that stretch reads VWRSAELTKDYKEGDKSLQL. Positions 69 to 761 constitute a Myosin motor domain; the sequence is VGENDLTALS…QVAYLEKLRA (693 aa). Residue 163–170 participates in ATP binding; the sequence is GESGAGKT. Residues 596–630 form a disordered region; the sequence is KDPVPATTPGKGSSSKISVRSARPPMKVSNKEHKK. The segment at 640 to 662 is actin-binding; it reads LHLLMETLNATTPHYVRCIKPND. IQ domains are found at residues 769–798, 792–821, 817–848, 840–869, 865–896, and 888–917; these read IMIQKTVRGWLQKVKYHRLKGATLTLQRYC, LTLQRYCRGHLARRLAEHLRRIRAAVVLQK, VVLQKHYRMQRARQAYQRVRRAAVVIQAFTRA, VVIQAFTRAMFVRRTYRQVLMEHKATTIQK, TTIQKHVRGWMARRHFQRLRDAAIVIQCAFRM, and IVIQCAFRMLKARRELKALRIEARSAEHLK. 2 coiled-coil regions span residues 899 to 1266 and 1341 to 1471; these read ARRE…ILRT and RLLE…GMLE. Disordered regions lie at residues 1093–1123 and 1166–1192; these read QTPGHRRNPSNQSSLESDSNYPSISTSEIGD and QLEKREQQDSKKVQAEPPQTDIDLDPN. Residues 1101 to 1121 show a composition bias toward polar residues; that stretch reads PSNQSSLESDSNYPSISTSEI. Positions 1166-1179 are enriched in basic and acidic residues; it reads QLEKREQQDSKKVQ. Ser-1446 is subject to Phosphoserine. Residues 1526–1803 enclose the Dilute domain; the sequence is TSTINGIKKV…IRTIQAQLQE (278 aa).

The protein belongs to the TRAFAC class myosin-kinesin ATPase superfamily. Myosin family. Component of the CART complex, at least composed of ACTN4, HGS/HRS, MYO5B and TRIM3. Interacts with RAB11FIP2, RAB11A, and RAB8A. Found in a complex with CFTR and RAB11A. Interacts with NPC1L1;. Interacts with LIMA1.

The protein localises to the cytoplasm. May be involved in vesicular trafficking via its association with the CART complex. The CART complex is necessary for efficient transferrin receptor recycling but not for EGFR degradation. Required in a complex with RAB11A and RAB11FIP2 for the transport of NPC1L1 to the plasma membrane. Together with RAB11A participates in CFTR trafficking to the plasma membrane and TF (transferrin) recycling in nonpolarized cells. Together with RAB11A and RAB8A participates in epithelial cell polarization. Together with RAB25 regulates transcytosis. Required for proper localization of bile salt export pump ABCB11 at the apical/canalicular plasma membrane of hepatocytes. The chain is Unconventional myosin-Vb (MYO5B) from Homo sapiens (Human).